The sequence spans 206 residues: CMP-5'-(N-acetyl-N-hydroxy-3-aminopropyl)phosphonate hydrolase (206 aa).

Positions 37–166 constitute a Nudix hydrolase domain; that stretch reads VRAPGAAIIV…RTVTSGTAIG (130 aa). A Nudix box motif is present at residues 74 to 95; sequence GLVDDREDPAVTAAREAEEETG. The segment covering 177-194 has biased composition (low complexity); the sequence is RQQPGGVQEQPGGAQQQG. Residues 177–206 form a disordered region; that stretch reads RQQPGGVQEQPGGAQQQGMNESHSGRTVRG.

The protein belongs to the Nudix hydrolase family. It depends on Mg(2+) as a cofactor.

It catalyses the reaction CMP-5'-(N-acetyl-N-hydroxy-3-aminopropyl)phosphonate + H2O = 3-(N-acetyl-N-hydroxy)aminopropylphosphonate + CMP + H(+). Its pathway is antibiotic biosynthesis. Its function is as follows. Nucleotide hydrolase involved in the biosynthesis of the phosphonate antibiotic FR-900098, a potent antimalarial agent that acts as an inhibitor of 1-deoxy-D-xylulose 5-phosphate reductoisomerase (DXR), the first enzyme in the nonmevalonate pathway for isoprenoid biosynthesis. Catalyzes the hydrolysis of CMP-5'-(N-acetyl-N-hydroxy-3-aminopropyl)phosphonate (CMP-5'-FR-900098) to produce CMP and the final compound FR-900098. In vitro, has broad substrate specificity and also catalyzes the hydrolysis of all the other CMP-containing intermediates within the pathway and shows low activity toward CTP. In Streptomyces rubellomurinus (strain ATCC 31215), this protein is CMP-5'-(N-acetyl-N-hydroxy-3-aminopropyl)phosphonate hydrolase.